A 341-amino-acid chain; its full sequence is N-acetyl-gamma-glutamyl-phosphate reductase (341 aa).

The active site involves C146.

This sequence belongs to the NAGSA dehydrogenase family. Type 1 subfamily.

It is found in the cytoplasm. It catalyses the reaction N-acetyl-L-glutamate 5-semialdehyde + phosphate + NADP(+) = N-acetyl-L-glutamyl 5-phosphate + NADPH + H(+). It functions in the pathway amino-acid biosynthesis; L-arginine biosynthesis; N(2)-acetyl-L-ornithine from L-glutamate: step 3/4. Catalyzes the NADPH-dependent reduction of N-acetyl-5-glutamyl phosphate to yield N-acetyl-L-glutamate 5-semialdehyde. The polypeptide is N-acetyl-gamma-glutamyl-phosphate reductase (Limosilactobacillus fermentum (strain NBRC 3956 / LMG 18251) (Lactobacillus fermentum)).